Reading from the N-terminus, the 329-residue chain is Helicase VP6-A (329 aa).

Disordered regions lie at residues 27-130 and 189-232; these read INLV…TNGG and DLRR…SEEP. 3 stretches are compositionally biased toward basic and acidic residues: residues 36–58, 65–83, and 96–109; these read EGGK…KDGE, GQKE…DRRI, and SGER…RGDG. Lys-110 is a binding site for ATP. Residues 110–129 show a composition bias toward gly residues; sequence KVGGGGGDADAGVGATGTNG. 2 stretches are compositionally biased toward basic and acidic residues: residues 189 to 207 and 215 to 232; these read DLRR…ERGG and HGDA…SEEP.

Belongs to the reoviruses VP6 family. As to quaternary structure, homohexamer.

The protein localises to the virion. The catalysed reaction is ATP + H2O = ADP + phosphate + H(+). Functionally, ATP dependent RNA helicase essential for RNA packaging and viral transcription. Possesses ss- and dsRNA-binding capacity. The polypeptide is Helicase VP6-A (Segment-9) (Antilocapra americana (Pronghorn)).